The primary structure comprises 429 residues: Serine--tRNA ligase (429 aa).

236-238 (TGE) lines the L-serine pocket. 267–269 (RSE) provides a ligand contact to ATP. E290 is an L-serine binding site. Position 354–357 (354–357 (EISS)) interacts with ATP. Position 390 (S390) interacts with L-serine.

It belongs to the class-II aminoacyl-tRNA synthetase family. Type-1 seryl-tRNA synthetase subfamily. Homodimer. The tRNA molecule binds across the dimer.

It is found in the cytoplasm. It catalyses the reaction tRNA(Ser) + L-serine + ATP = L-seryl-tRNA(Ser) + AMP + diphosphate + H(+). The enzyme catalyses tRNA(Sec) + L-serine + ATP = L-seryl-tRNA(Sec) + AMP + diphosphate + H(+). Its pathway is aminoacyl-tRNA biosynthesis; selenocysteinyl-tRNA(Sec) biosynthesis; L-seryl-tRNA(Sec) from L-serine and tRNA(Sec): step 1/1. Catalyzes the attachment of serine to tRNA(Ser). Is also able to aminoacylate tRNA(Sec) with serine, to form the misacylated tRNA L-seryl-tRNA(Sec), which will be further converted into selenocysteinyl-tRNA(Sec). The chain is Serine--tRNA ligase from Vesicomyosocius okutanii subsp. Calyptogena okutanii (strain HA).